Reading from the N-terminus, the 50-residue chain is uncharacterized protein (50 aa).

Its subcellular location is the mitochondrion. This is an uncharacterized protein from Saccharomyces cerevisiae (strain ATCC 204508 / S288c) (Baker's yeast).